Reading from the N-terminus, the 155-residue chain is Putative pre-16S rRNA nuclease (155 aa).

This sequence belongs to the YqgF nuclease family.

It is found in the cytoplasm. Its function is as follows. Could be a nuclease involved in processing of the 5'-end of pre-16S rRNA. The polypeptide is Putative pre-16S rRNA nuclease (Xanthomonas euvesicatoria pv. vesicatoria (strain 85-10) (Xanthomonas campestris pv. vesicatoria)).